The following is a 438-amino-acid chain: Gamma-glutamyl phosphate reductase (438 aa).

It belongs to the gamma-glutamyl phosphate reductase family.

It is found in the cytoplasm. The catalysed reaction is L-glutamate 5-semialdehyde + phosphate + NADP(+) = L-glutamyl 5-phosphate + NADPH + H(+). It participates in amino-acid biosynthesis; L-proline biosynthesis; L-glutamate 5-semialdehyde from L-glutamate: step 2/2. Its function is as follows. Catalyzes the NADPH-dependent reduction of L-glutamate 5-phosphate into L-glutamate 5-semialdehyde and phosphate. The product spontaneously undergoes cyclization to form 1-pyrroline-5-carboxylate. This chain is Gamma-glutamyl phosphate reductase, found in Prochlorococcus marinus (strain NATL1A).